The primary structure comprises 81 residues: MDSSNCIKIDVKYDMPLHYQCDNNADKDVVNAYDTIDVDPNKRFIINHNHEQQQVNETNKQVVDKTFINDTATYNSCIIKI.

This is an uncharacterized protein from Autographa californica nuclear polyhedrosis virus (AcMNPV).